Consider the following 513-residue polypeptide: MSENQKEVSPPQAISVKSEASSSIFSKPISTSSPAGLAAAQRVTPGKLSTLLLEMGPLAIRHITQTLCLDIPCFKDLSSSKQRRLIMSAMESGDKEKSVVFEKIGWGQWSAKRVDPANFDKELEATNFANAKVKDLISQESQRRKSNNSNSNSGGKVEMPMKVEHNITNIDGATTPPTAVASTTIPVNIKRSKSPLAAANVVYIDENALASEDEDEEFDEDDHHLHYQNKSRNSSNNFGKSSNGDPYSFGRRRSQVVFADSTPENIEHEIIAQKIRPLLRNRRRSSIKPHTPFISKLNTHQDSSYLSPNTTSTTTPSNNNSNSNQAKIDLEKLTATSEPTSRRASRLSVSKESSIRSTLFPNKNYLIVTTNPNSKATSVSTSPKLEEQMNVSSNPIVLSDKEKHRVASQHLNGESSPQLVPHSHHQPHSDTDEEDWESIGAASLRNNSLAPNIDSVASSTNGVVSPKPTNPSFTNSQNGDIEPPLQHDQQKHEQQPRNGEDNSAAFLLMSLKS.

3 disordered regions span residues 1–20 (MSEN…KSEA), 134–159 (KDLI…KVEM), and 227–249 (YQNK…PYSF). A compositionally biased stretch (basic and acidic residues) spans 134–143 (KDLISQESQR). A compositionally biased stretch (low complexity) spans 230–244 (KSRNSSNNFGKSSNG). A Phosphoserine modification is found at serine 254. Disordered regions lie at residues 282–354 (RRRS…KESS), 373–437 (NSKA…EDWE), and 450–513 (APNI…SLKS). A compositionally biased stretch (polar residues) spans 296 to 306 (KLNTHQDSSYL). Low complexity predominate over residues 307 to 324 (SPNTTSTTTPSNNNSNSN). Polar residues-rich tracts occupy residues 373–396 (NSKA…SNPI), 409–418 (QHLNGESSPQ), 450–463 (APNI…TNGV), and 470–479 (NPSFTNSQNG). Positions 488–500 (DQQKHEQQPRNGE) are enriched in basic and acidic residues.

The protein belongs to the STB3 family. In terms of assembly, interacts with SIN3.

Its subcellular location is the cytoplasm. This chain is Protein STB3 (STB3), found in Saccharomyces cerevisiae (strain ATCC 204508 / S288c) (Baker's yeast).